The chain runs to 549 residues: Oxygen-dependent choline dehydrogenase (549 aa).

FAD is bound at residue 4-33 (DFVIIGSGSAGSALAYRLSEDGANSVVVLE). The Proton acceptor role is filled by H465.

Belongs to the GMC oxidoreductase family. The cofactor is FAD.

The catalysed reaction is choline + A = betaine aldehyde + AH2. It carries out the reaction betaine aldehyde + NAD(+) + H2O = glycine betaine + NADH + 2 H(+). Its pathway is amine and polyamine biosynthesis; betaine biosynthesis via choline pathway; betaine aldehyde from choline (cytochrome c reductase route): step 1/1. In terms of biological role, involved in the biosynthesis of the osmoprotectant glycine betaine. Catalyzes the oxidation of choline to betaine aldehyde and betaine aldehyde to glycine betaine at the same rate. This is Oxygen-dependent choline dehydrogenase from Sinorhizobium medicae (strain WSM419) (Ensifer medicae).